The following is a 438-amino-acid chain: Glutamate-1-semialdehyde 2,1-aminomutase (438 aa).

Residue Lys-277 is modified to N6-(pyridoxal phosphate)lysine.

Belongs to the class-III pyridoxal-phosphate-dependent aminotransferase family. HemL subfamily. In terms of assembly, homodimer. Pyridoxal 5'-phosphate serves as cofactor.

It is found in the cytoplasm. It carries out the reaction (S)-4-amino-5-oxopentanoate = 5-aminolevulinate. The protein operates within porphyrin-containing compound metabolism; protoporphyrin-IX biosynthesis; 5-aminolevulinate from L-glutamyl-tRNA(Glu): step 2/2. It functions in the pathway porphyrin-containing compound metabolism; chlorophyll biosynthesis. This is Glutamate-1-semialdehyde 2,1-aminomutase from Synechococcus sp. (strain CC9311).